Reading from the N-terminus, the 389-residue chain is Aspartic protease 6 (389 aa).

A signal peptide spans 1–15 (MKTFILLAVLGLASA). A Peptidase A1 domain is found at 71–384 (YLGNITIGTP…DIGNKRMGFA (314 aa)). An N-linked (GlcNAc...) asparagine glycan is attached at asparagine 74. Residue aspartate 89 is part of the active site. Cysteine 102 and cysteine 106 are disulfide-bonded. Residue aspartate 277 is part of the active site. Cysteine 312 and cysteine 344 are joined by a disulfide.

It belongs to the peptidase A1 family. Post-translationally, glycosylated. Has phosphorylcholine-substituted oligosaccharide N-glycans. In terms of tissue distribution, expressed in intestine, muscles, pharynx and hypodermis.

It is found in the secreted. In terms of biological role, aspartic protease. This is Aspartic protease 6 from Caenorhabditis elegans.